A 345-amino-acid polypeptide reads, in one-letter code: Anthranilate phosphoribosyltransferase (345 aa).

5-phospho-alpha-D-ribose 1-diphosphate-binding positions include glycine 84, 87 to 88, threonine 92, 94 to 97, 112 to 120, and serine 124; these read GD, NIST, and KHGNRSVSS. Residue glycine 84 participates in anthranilate binding. Serine 96 lines the Mg(2+) pocket. Asparagine 115 is a binding site for anthranilate. Arginine 170 contacts anthranilate. Mg(2+)-binding residues include aspartate 229 and glutamate 230.

This sequence belongs to the anthranilate phosphoribosyltransferase family. Homodimer. It depends on Mg(2+) as a cofactor.

It catalyses the reaction N-(5-phospho-beta-D-ribosyl)anthranilate + diphosphate = 5-phospho-alpha-D-ribose 1-diphosphate + anthranilate. The protein operates within amino-acid biosynthesis; L-tryptophan biosynthesis; L-tryptophan from chorismate: step 2/5. Its function is as follows. Catalyzes the transfer of the phosphoribosyl group of 5-phosphorylribose-1-pyrophosphate (PRPP) to anthranilate to yield N-(5'-phosphoribosyl)-anthranilate (PRA). This Xanthomonas oryzae pv. oryzae (strain MAFF 311018) protein is Anthranilate phosphoribosyltransferase.